A 445-amino-acid chain; its full sequence is Gamma conglutin 2 (445 aa).

Positions 1-33 are cleaved as a signal peptide; it reads MAQNMAPIFHFIAISLSCSFLFVLSSSQDSQSL. Positions 60–425 constitute a Peptidase A1 domain; sequence HWANIHKRTP…DFAKSRVEFN (366 aa). 5 disulfide bridges follow: Cys88–Cys178, Cys102–Cys115, Cys107–Cys133, Cys118–Cys128, and Cys346–Cys387. N-linked (GlcNAc...) asparagine glycosylation is present at Asn130.

Belongs to the peptidase A1 family. Two-subunit monomeric unit made of alpha and beta subunits coupled by disulfide bonds (at pH 4.5 and under non-reducing conditions). Can also form oligomers including dimer, tetramer and cyclic hexamer (trimer of dimers) (at pH &gt; 5.5). Component of globulins complexes which accumulate in seeds. Interacts with flavonoids (e.g. apigenin glucosides) present in globulins complexes. Post-translationally, glycosylated on alpha chain.

The protein localises to the secreted. Its subcellular location is the extracellular space. Sulfur-rich seed storage protein that remains undegraded at germination. The protein is Gamma conglutin 2 of Lupinus angustifolius (Narrow-leaved blue lupine).